The primary structure comprises 337 residues: Anthranilate phosphoribosyltransferase (337 aa).

5-phospho-alpha-D-ribose 1-diphosphate is bound by residues Gly-81, 84–85 (GD), Ser-89, 91–94 (NVST), 109–117 (KHGNRAMSS), and Ala-121. Residue Gly-81 participates in anthranilate binding. Mg(2+) is bound at residue Ser-93. Position 112 (Asn-112) interacts with anthranilate. Anthranilate is bound at residue Arg-167. Mg(2+) is bound by residues Asp-226 and Glu-227.

The protein belongs to the anthranilate phosphoribosyltransferase family. In terms of assembly, homodimer. Mg(2+) serves as cofactor.

The enzyme catalyses N-(5-phospho-beta-D-ribosyl)anthranilate + diphosphate = 5-phospho-alpha-D-ribose 1-diphosphate + anthranilate. It participates in amino-acid biosynthesis; L-tryptophan biosynthesis; L-tryptophan from chorismate: step 2/5. In terms of biological role, catalyzes the transfer of the phosphoribosyl group of 5-phosphorylribose-1-pyrophosphate (PRPP) to anthranilate to yield N-(5'-phosphoribosyl)-anthranilate (PRA). This Afipia carboxidovorans (strain ATCC 49405 / DSM 1227 / KCTC 32145 / OM5) (Oligotropha carboxidovorans) protein is Anthranilate phosphoribosyltransferase.